Reading from the N-terminus, the 358-residue chain is MKAYKVAVLAGDGIGPLVMKEALKILTFISQKYNFSFEFNEAKIGGASIDAYGVALSDETLKLCEQSDAILFGSVGGPKWDNLPIDQRPERASLLPLRKHFNLFANLRPCKIYESLTHASPLKNEIIQKGVDILCVRELTGGIYFGKQDLGKESAYDTEIYTKKEIERIAHIAFESARIRKKKVHLIDKANVLASSILWREVVANVVKDYQDINLEYMYVDNAAMQIVKNPSIFDVMLCSNLFGDILSDELAAINGSLGLLSSASLNDKGFGLYEPAGGSAPDIAHLNIANPIAQILSAALMLKYSFKEEQAAQDIENAISLALAQGKMTKDLNAKSYLNTDEMGDCILEILKENNNG.

77–90 (GPKWDNLPIDQRPE) provides a ligand contact to NAD(+). Residues arginine 98, arginine 108, arginine 137, and aspartate 221 each contribute to the substrate site. 3 residues coordinate Mg(2+): aspartate 221, aspartate 245, and aspartate 249. 279–291 (GSAPDIAHLNIAN) lines the NAD(+) pocket.

Belongs to the isocitrate and isopropylmalate dehydrogenases family. LeuB type 1 subfamily. Homodimer. Mg(2+) is required as a cofactor. Mn(2+) serves as cofactor.

It is found in the cytoplasm. It carries out the reaction (2R,3S)-3-isopropylmalate + NAD(+) = 4-methyl-2-oxopentanoate + CO2 + NADH. It functions in the pathway amino-acid biosynthesis; L-leucine biosynthesis; L-leucine from 3-methyl-2-oxobutanoate: step 3/4. Its function is as follows. Catalyzes the oxidation of 3-carboxy-2-hydroxy-4-methylpentanoate (3-isopropylmalate) to 3-carboxy-4-methyl-2-oxopentanoate. The product decarboxylates to 4-methyl-2 oxopentanoate. This is 3-isopropylmalate dehydrogenase from Campylobacter jejuni (strain RM1221).